We begin with the raw amino-acid sequence, 407 residues long: Putative polysaccharide ligase RF_0568 (407 aa).

Helical transmembrane passes span 15-35 (LGMV…LMLF), 71-91 (MTIK…LFAI), 100-120 (FIQV…VPFG), 129-149 (LILG…SHGF), 166-186 (GCAL…SSGK), 203-223 (ISDS…FILA), 229-249 (IFFK…PVIA), 272-292 (LFIW…GYGF), 324-344 (ILQI…CLVY), and 379-399 (IWQI…KLLV).

Belongs to the O-antigen ligase family.

The protein localises to the membrane. This chain is Putative polysaccharide ligase RF_0568, found in Rickettsia felis (strain ATCC VR-1525 / URRWXCal2) (Rickettsia azadi).